Here is a 142-residue protein sequence, read N- to C-terminus: Large ribosomal subunit protein uL11 (142 aa).

It belongs to the universal ribosomal protein uL11 family. As to quaternary structure, part of the ribosomal stalk of the 50S ribosomal subunit. Interacts with L10 and the large rRNA to form the base of the stalk. L10 forms an elongated spine to which L12 dimers bind in a sequential fashion forming a multimeric L10(L12)X complex. In terms of processing, one or more lysine residues are methylated.

Its function is as follows. Forms part of the ribosomal stalk which helps the ribosome interact with GTP-bound translation factors. The protein is Large ribosomal subunit protein uL11 of Cronobacter sakazakii (strain ATCC BAA-894) (Enterobacter sakazakii).